Consider the following 218-residue polypeptide: Glutathione S-transferase (218 aa).

Residues 3-88 (SKPVLGYWDI…YIGRKYKLTG (86 aa)) form the GST N-terminal domain. Glutathione contacts are provided by residues 9 to 10 (YW), 43 to 46 (RSAW), Lys50, 59 to 60 (NL), and 72 to 73 (QT). Residues 90–206 (NEPEELRVSL…YIKAQQPKLF (117 aa)) form the GST C-terminal domain. Tyr116 is a binding site for substrate.

Belongs to the GST superfamily. Mu family.

It catalyses the reaction RX + glutathione = an S-substituted glutathione + a halide anion + H(+). Functionally, conjugation of reduced glutathione to a wide number of exogenous and endogenous hydrophobic electrophiles. This Tyrophagus putrescentiae (Mold mite) protein is Glutathione S-transferase.